Reading from the N-terminus, the 218-residue chain is Adenylate kinase (218 aa).

10 to 15 (GAGKGT) is an ATP binding site. The tract at residues 30–59 (STGDMLRNAAKEGKPLGLEAKKIMDAGQLV) is NMP. Residues T31, R36, 57 to 59 (QLV), 85 to 88 (GFPR), and Q92 each bind AMP. The interval 122-159 (GRRVHLASGRSYHVMFNPPKQEGLDDATGEPLVQRADD) is LID. Residues R123 and 132–133 (SY) contribute to the ATP site. 2 residues coordinate AMP: R156 and R167. G203 serves as a coordination point for ATP.

The protein belongs to the adenylate kinase family. As to quaternary structure, monomer.

It is found in the cytoplasm. The enzyme catalyses AMP + ATP = 2 ADP. It functions in the pathway purine metabolism; AMP biosynthesis via salvage pathway; AMP from ADP: step 1/1. Functionally, catalyzes the reversible transfer of the terminal phosphate group between ATP and AMP. Plays an important role in cellular energy homeostasis and in adenine nucleotide metabolism. This is Adenylate kinase from Chlorobium chlorochromatii (strain CaD3).